The chain runs to 262 residues: Hydroxyethylthiazole kinase (262 aa).

Met-50 is a binding site for substrate. ATP-binding residues include Arg-125 and Thr-171. Gly-198 lines the substrate pocket.

This sequence belongs to the Thz kinase family. It depends on Mg(2+) as a cofactor.

The enzyme catalyses 5-(2-hydroxyethyl)-4-methylthiazole + ATP = 4-methyl-5-(2-phosphooxyethyl)-thiazole + ADP + H(+). It functions in the pathway cofactor biosynthesis; thiamine diphosphate biosynthesis; 4-methyl-5-(2-phosphoethyl)-thiazole from 5-(2-hydroxyethyl)-4-methylthiazole: step 1/1. Catalyzes the phosphorylation of the hydroxyl group of 4-methyl-5-beta-hydroxyethylthiazole (THZ). In Shigella flexneri serotype 5b (strain 8401), this protein is Hydroxyethylthiazole kinase.